Here is a 986-residue protein sequence, read N- to C-terminus: Rho guanine nucleotide exchange factor 2 (986 aa).

The Phorbol-ester/DAG-type zinc-finger motif lies at 39-86 (GHLFTTISVSGMTMCYACNKSITAKEALICPTCNVTIHNRCKDTLANC). Phosphoserine is present on residues S109, S122, S129, S133, and S137. The tract at residues 131–161 (RQSLLGSRRGRSSLSLAKSVSTTNIAGHFND) is interaction with DYNLT1. Residue S143 is modified to Phosphoserine; by PAK4. A phosphoserine mark is found at S151, S163, S172, S174, and S177. In terms of domain architecture, DH spans 235–432 (KQQDVIYELI…KELLSNVDEG (198 aa)). K353 is subject to N6-acetyllysine. The PH domain occupies 472 to 571 (KLIHDGCLLW…WIRVIQQSVR (100 aa)). Positions 587–611 (EAYLRRIKMELQQKDRALVELLREK) form a coiled coil. A phosphoserine mark is found at S645 and S648. Phosphothreonine; by MAPK1 or MAPK3 is present on T679. The segment at 683 to 705 (PALPLEPDSGGNTSPGVTANGEA) is disordered. Phosphoserine is present on residues S691, S696, S711, and S782. Residues 798 to 867 (EKQATELALL…RQLAALGQTE (70 aa)) are a coiled coil. The tract at residues 862-986 (ALGQTEPLPA…RDGEAVASES (125 aa)) is disordered. S886 bears the Phosphoserine; by PAK1 and AURKA mark. Y894 is modified (phosphotyrosine). Position 896 is a phosphoserine; by PAK4 (S896). Residues 920 to 939 (RNFEDRERQELGSPEERLQD) show a composition bias toward basic and acidic residues. Phosphoserine is present on residues S932, S940, and S941. The segment covering 941 to 950 (SDPDTGSEEE) has biased composition (acidic residues). T945 bears the Phosphothreonine mark. Residues S947, S952, S953, S956, and S960 each carry the phosphoserine modification.

In terms of assembly, found in a complex composed at least of ARHGEF2, NOD2 and RIPK2. Interacts with RIPK2; the interaction mediates tyrosine phosphorylation of RIPK2 by Src kinase CSK. Interacts with RIPK1 and RIPK3. Interacts with YWHAZ/14-3-3 zeta; when phosphorylated at Ser-886. Interacts with the kinases PAK4, AURKA and MAPK1. Interacts with RHOA and RAC1. Interacts with NOD1. Interacts (via the N-terminal zinc finger) with CAPN6 (via domain II). Interacts with DYNLT1. Post-translationally, phosphorylation of Ser-886 by PAK1 induces binding to protein YWHAZ, promoting its relocation to microtubules and the inhibition of its activity. Phosphorylated by AURKA and CDK1 during mitosis, which negatively regulates its activity. Phosphorylation by MAPK1 or MAPK3 increases nucleotide exchange activity. Phosphorylation by PAK4 releases GEF-H1 from the microtubules. Phosphorylated on serine, threonine and tyrosine residues in a RIPK2-dependent manner.

It localises to the cytoplasm. The protein resides in the cytoskeleton. Its subcellular location is the cell junction. It is found in the tight junction. The protein localises to the golgi apparatus. It localises to the spindle. The protein resides in the cell projection. Its subcellular location is the ruffle membrane. It is found in the cytoplasmic vesicle. In terms of biological role, activates Rho-GTPases by promoting the exchange of GDP for GTP. May be involved in epithelial barrier permeability, cell motility and polarization, dendritic spine morphology, antigen presentation, leukemic cell differentiation, cell cycle regulation, innate immune response, and cancer. Binds Rac-GTPases, but does not seem to promote nucleotide exchange activity toward Rac-GTPases, which was uniquely reported in PubMed:9857026. May stimulate instead the cortical activity of Rac. Inactive toward CDC42, TC10, or Ras-GTPases. Forms an intracellular sensing system along with NOD1 for the detection of microbial effectors during cell invasion by pathogens. Required for RHOA and RIP2 dependent NF-kappaB signaling pathways activation upon S.flexneri cell invasion. Involved not only in sensing peptidoglycan (PGN)-derived muropeptides through NOD1 that is independent of its GEF activity, but also in the activation of NF-kappaB by Shigella effector proteins (IpgB2 and OspB) which requires its GEF activity and the activation of RhoA. Involved in innate immune signaling transduction pathway promoting cytokine IL6/interleukin-6 and TNF-alpha secretion in macrophage upon stimulation by bacterial peptidoglycans; acts as a signaling intermediate between NOD2 receptor and RIPK2 kinase. Contributes to the tyrosine phosphorylation of RIPK2 through Src tyrosine kinase leading to NF-kappaB activation by NOD2. Overexpression activates Rho-, but not Rac-GTPases, and increases paracellular permeability. Involved in neuronal progenitor cell division and differentiation. Involved in the migration of precerebellar neurons. The polypeptide is Rho guanine nucleotide exchange factor 2 (ARHGEF2) (Homo sapiens (Human)).